Here is a 1311-residue protein sequence, read N- to C-terminus: Zinc finger protein 521 (1311 aa).

The span at 1 to 10 (MSRRKQAKPR) shows a compositional bias: basic residues. A disordered region spans residues 1-37 (MSRRKQAKPRSLKDPNCKLEDKTEDGEALDCKKRPED). The span at 11 to 21 (SLKDPNCKLED) shows a compositional bias: basic and acidic residues. Residues 47-67 (HSCDSCLQVFESLSDITEHKI) form a C2H2-type 1; degenerate zinc finger. A disordered region spans residues 81-108 (DPTCSWPASSPSSKDQTSPSHGEGCDFG). Over residues 87–102 (PASSPSSKDQTSPSHG) the composition is skewed to low complexity. 7 consecutive C2H2-type zinc fingers follow at residues 118–140 (YPCQ…EQSH), 146–168 (FKCT…IKLH), 174–196 (YHCS…LKTH), 202–224 (YKCA…MQVH), 246–269 (QKCS…AECH), 281–304 (LQCV…EQVH), and 310–332 (NSCS…MDSH). Residues 349–358 (VGYTSVSSTT) are compositionally biased toward low complexity. The disordered stretch occupies residues 349–397 (VGYTSVSSTTPDSNLSVDSSTMVEAAPPIPKSRGRKRAAQQTPDMTGPS). Composition is skewed to polar residues over residues 359–370 (PDSNLSVDSSTM) and 387–397 (AQQTPDMTGPS). A C2H2-type 9; degenerate zinc finger spans residues 405-429 (YSCIYCNKQLFSSLAVLQIHLKTMH). C2H2-type zinc fingers lie at residues 437–460 (HICQ…KQVH), 477–500 (YQCN…RCSH), and 513–536 (FFCP…RQVH). A Phosphoserine modification is found at Ser546. The C2H2-type 13; atypical zinc finger occupies 560–585 (YSCSYCTNSPIFNSVLKLNKHIKENH). 2 positions are modified to phosphoserine: Ser605 and Ser608. 7 C2H2-type zinc fingers span residues 634–656 (YICN…LKTH), 664–686 (LTCP…VTIH), 694–717 (YICE…LDMH), 722–745 (FRCT…AVKH), 752–775 (YRCT…KHNH), 783–805 (HKCI…ITTH), and 809–832 (YNCK…REKH). The interval 863-882 (TNSQESHNSHDGSEEDVDTS) is disordered. The segment at 886–908 (YGCDICGAAYTMETLLQNHQLRD) adopts a C2H2-type 21; degenerate zinc-finger fold. 3 consecutive C2H2-type zinc fingers follow at residues 930 to 952 (YKCN…MQTH), 959 to 981 (YMCP…KVTH), and 1020 to 1042 (FRCV…GTFH). The segment at 1065–1083 (YKCASCLKEFRSKQDLVKL) adopts a C2H2-type 25; degenerate zinc-finger fold. The segment at 1138-1161 (TRCSSCNVKFESESELQNHIQTIH) adopts a C2H2-type 26 zinc-finger fold. Lys1146 is covalently cross-linked (Glycyl lysine isopeptide (Lys-Gly) (interchain with G-Cter in SUMO2)). A compositionally biased stretch (polar residues) spans 1168–1178 (SNSTQLKTPQV). The segment at 1168–1188 (SNSTQLKTPQVSPMPRISPSQ) is disordered. 4 C2H2-type zinc fingers span residues 1195 to 1217 (YQCI…VANH), 1225 to 1247 (HECK…LIEH), 1256 to 1279 (FKCP…FSAH), and 1286 to 1309 (YDCT…MTQH).

This sequence belongs to the krueppel C2H2-type zinc-finger protein family. In terms of assembly, interacts with EBF1. Interacts with SMAD1 and SMAD4. Predominantly expressed in hematopoietic cells. Present in organs and tissues that contain stem and progenitor cells, myeloid and/or lymphoid: placenta, spleen, lymph nodes, thymus, bone marrow and fetal liver. Within the hematopoietic system, it is abundant in CD34(+) cells but undetectable in mature peripheral blood leukocytes, and its levels rapidly decrease during the differentiation of CD34(+) cells in response to hemopoietins.

It localises to the nucleus. Transcription factor that can both act as an activator or a repressor depending on the context. Involved in BMP signaling and in the regulation of the immature compartment of the hematopoietic system. Associates with SMADs in response to BMP2 leading to activate transcription of BMP target genes. Acts as a transcriptional repressor via its interaction with EBF1, a transcription factor involved specification of B-cell lineage; this interaction preventing EBF1 to bind DNA and activate target genes. The polypeptide is Zinc finger protein 521 (ZNF521) (Homo sapiens (Human)).